The following is an 843-amino-acid chain: Taste receptor type 1 member 2 (843 aa).

The first 19 residues, 1-19 (MGPQARTLCLLSLLLHVLP), serve as a signal peptide directing secretion. Topologically, residues 20–570 (KPGKLVENSD…TFLEWHEVPT (551 aa)) are extracellular. N-linked (GlcNAc...) asparagine glycosylation is found at Asn-87, Asn-296, Asn-316, Asn-355, Asn-372, Asn-432, Asn-484, Asn-491, and Asn-531. The chain crosses the membrane as a helical span at residues 571-591 (IVVAILAALGFFSTLAILFIF). Residues 592-606 (WRHFQTPMVRSAGGP) are Cytoplasmic-facing. Residues 607 to 627 (MCFLMLVPLLLAFGMVPVYVG) traverse the membrane as a helical segment. Residues 628-642 (PPTVFSCFCRQAFFT) lie on the Extracellular side of the membrane. A helical membrane pass occupies residues 643 to 663 (VCFSICLSCITVRSFQIVCVF). At 664–682 (KMARRLPSAYSFWMRYHGP) the chain is on the cytoplasmic side. The chain crosses the membrane as a helical span at residues 683-703 (YVFVAFITAIKVALVVGNMLA). Topologically, residues 704 to 731 (TTINPIGRTDPDDPNIMILSCHPNYRNG) are extracellular. A helical transmembrane segment spans residues 732–752 (LLFNTSMDLLLSVLGFSFAYM). Residues 753-764 (GKELPTNYNEAK) are Cytoplasmic-facing. Residues 765-785 (FITLSMTFSFTSSISLCTFMS) traverse the membrane as a helical segment. Over 786 to 789 (VHDG) the chain is Extracellular. Residues 790 to 810 (VLVTIMDLLVTVLNFLAIGLG) form a helical membrane-spanning segment. At 811 to 843 (YFGPKCYMILFYPERNTSAYFNSMIQGYTMRKS) the chain is on the cytoplasmic side.

Belongs to the G-protein coupled receptor 3 family. TAS1R subfamily. Forms heterodimers with TAS1R3. In terms of tissue distribution, abundantly expressed in circumvallate and foliate papillae.

It localises to the cell membrane. Putative taste receptor. TAS1R2/TAS1R3 recognizes diverse natural and synthetic sweeteners. This is Taste receptor type 1 member 2 (Tas1r2) from Rattus norvegicus (Rat).